We begin with the raw amino-acid sequence, 352 residues long: UDP-N-acetylglucosamine--N-acetylmuramyl-(pentapeptide) pyrophosphoryl-undecaprenol N-acetylglucosamine transferase (352 aa).

Serine 195 and glutamine 287 together coordinate UDP-N-acetyl-alpha-D-glucosamine.

This sequence belongs to the glycosyltransferase 28 family. MurG subfamily.

The protein resides in the cell membrane. It catalyses the reaction Mur2Ac(oyl-L-Ala-gamma-D-Glu-L-Lys-D-Ala-D-Ala)-di-trans,octa-cis-undecaprenyl diphosphate + UDP-N-acetyl-alpha-D-glucosamine = beta-D-GlcNAc-(1-&gt;4)-Mur2Ac(oyl-L-Ala-gamma-D-Glu-L-Lys-D-Ala-D-Ala)-di-trans,octa-cis-undecaprenyl diphosphate + UDP + H(+). It participates in cell wall biogenesis; peptidoglycan biosynthesis. In terms of biological role, cell wall formation. Catalyzes the transfer of a GlcNAc subunit on undecaprenyl-pyrophosphoryl-MurNAc-pentapeptide (lipid intermediate I) to form undecaprenyl-pyrophosphoryl-MurNAc-(pentapeptide)GlcNAc (lipid intermediate II). The chain is UDP-N-acetylglucosamine--N-acetylmuramyl-(pentapeptide) pyrophosphoryl-undecaprenol N-acetylglucosamine transferase from Streptococcus pneumoniae (strain ATCC BAA-255 / R6).